Reading from the N-terminus, the 104-residue chain is Gastrin (104 aa).

An N-terminal signal peptide occupies residues 1–21 (MQRLCVCVLILALALTAFSEA). The tract at residues 22 to 49 (SWKPRSQLQDAPSGPGANGGLEPHWLNR) is disordered. Positions 22 to 58 (SWKPRSQLQDAPSGPGANGGLEPHWLNRLGPASHHRW) are excised as a propeptide. 2 positions are modified to pyrrolidone carboxylic acid: Q59 and Q76. Residue Y87 is modified to Sulfotyrosine. Residue F92 is modified to Phenylalanine amide. S96 is subject to Phosphoserine. A propeptide spanning residues 96 to 104 (SAEDGDQHP) is cleaved from the precursor.

This sequence belongs to the gastrin/cholecystokinin family.

Its subcellular location is the secreted. Gastrin stimulates the stomach mucosa to produce and secrete hydrochloric acid and the pancreas to secrete its digestive enzymes. It also stimulates smooth muscle contraction and increases blood circulation and water secretion in the stomach and intestine. The polypeptide is Gastrin (GAST) (Felis catus (Cat)).